The sequence spans 58 residues: Small ribosomal subunit protein bS21 (58 aa).

The disordered stretch occupies residues 37 to 58 (FYEKPSVKRKRKSEAARKRKKF). Residues 43–58 (VKRKRKSEAARKRKKF) show a composition bias toward basic residues.

Belongs to the bacterial ribosomal protein bS21 family.

The sequence is that of Small ribosomal subunit protein bS21 from Streptococcus sanguinis (strain SK36).